A 320-amino-acid polypeptide reads, in one-letter code: Biotin synthase (320 aa).

One can recognise a Radical SAM core domain in the interval 39–267 (NAIQLATLLS…KARVRLSAGR (229 aa)). [4Fe-4S] cluster is bound by residues Cys-54, Cys-58, and Cys-61. Residues Cys-98, Cys-130, Cys-190, and Arg-262 each coordinate [2Fe-2S] cluster.

This sequence belongs to the radical SAM superfamily. Biotin synthase family. In terms of assembly, homodimer. [4Fe-4S] cluster serves as cofactor. [2Fe-2S] cluster is required as a cofactor.

It catalyses the reaction (4R,5S)-dethiobiotin + (sulfur carrier)-SH + 2 reduced [2Fe-2S]-[ferredoxin] + 2 S-adenosyl-L-methionine = (sulfur carrier)-H + biotin + 2 5'-deoxyadenosine + 2 L-methionine + 2 oxidized [2Fe-2S]-[ferredoxin]. It functions in the pathway cofactor biosynthesis; biotin biosynthesis; biotin from 7,8-diaminononanoate: step 2/2. In terms of biological role, catalyzes the conversion of dethiobiotin (DTB) to biotin by the insertion of a sulfur atom into dethiobiotin via a radical-based mechanism. The protein is Biotin synthase of Synechococcus elongatus (strain ATCC 33912 / PCC 7942 / FACHB-805) (Anacystis nidulans R2).